A 415-amino-acid polypeptide reads, in one-letter code: Probable N-acetyl-gamma-glutamyl-phosphate reductase, chloroplastic (415 aa).

A chloroplast-targeting transit peptide spans 1–74; the sequence is MGSTALGGGA…SGVKSGEEVR (74 aa). The disordered stretch occupies residues 48–68; it reads VRASVASSPQKQHSPKTSGVK. Polar residues predominate over residues 56 to 67; sequence PQKQHSPKTSGV. Cys219 is an active-site residue.

Belongs to the NAGSA dehydrogenase family. Type 1 subfamily. As to quaternary structure, homotetramer.

It is found in the plastid. The protein resides in the chloroplast. It catalyses the reaction N-acetyl-L-glutamate 5-semialdehyde + phosphate + NADP(+) = N-acetyl-L-glutamyl 5-phosphate + NADPH + H(+). The protein operates within amino-acid biosynthesis; L-arginine biosynthesis; N(2)-acetyl-L-ornithine from L-glutamate: step 3/4. The sequence is that of Probable N-acetyl-gamma-glutamyl-phosphate reductase, chloroplastic from Oryza sativa subsp. japonica (Rice).